We begin with the raw amino-acid sequence, 213 residues long: Protein-L-isoaspartate O-methyltransferase (213 aa).

Residue S64 is part of the active site.

This sequence belongs to the methyltransferase superfamily. L-isoaspartyl/D-aspartyl protein methyltransferase family.

Its subcellular location is the cytoplasm. The enzyme catalyses [protein]-L-isoaspartate + S-adenosyl-L-methionine = [protein]-L-isoaspartate alpha-methyl ester + S-adenosyl-L-homocysteine. Its function is as follows. Catalyzes the methyl esterification of L-isoaspartyl residues in peptides and proteins that result from spontaneous decomposition of normal L-aspartyl and L-asparaginyl residues. It plays a role in the repair and/or degradation of damaged proteins. The polypeptide is Protein-L-isoaspartate O-methyltransferase (Christiangramia forsetii (strain DSM 17595 / CGMCC 1.15422 / KT0803) (Gramella forsetii)).